A 248-amino-acid polypeptide reads, in one-letter code: ATP synthase subunit a, chloroplastic (248 aa).

Transmembrane regions (helical) follow at residues 35-55 (GQVF…AIAG), 94-114 (IPYI…GALI), 133-153 (INTT…AGLS), 202-222 (VFTL…GLFA), and 224-244 (SIQA…ALEG).

The protein belongs to the ATPase A chain family. F-type ATPases have 2 components, CF(1) - the catalytic core - and CF(0) - the membrane proton channel. CF(1) has five subunits: alpha(3), beta(3), gamma(1), delta(1), epsilon(1). CF(0) has four main subunits: a, b, b' and c.

It localises to the plastid. Its subcellular location is the chloroplast thylakoid membrane. Its function is as follows. Key component of the proton channel; it plays a direct role in the translocation of protons across the membrane. This chain is ATP synthase subunit a, chloroplastic, found in Antithamnion sp. (Red alga).